A 239-amino-acid chain; its full sequence is Regulator of G-protein signaling 20 (239 aa).

The tract at residues 1-29 (MRTANGGPRARASPSASPADPGLPEGSER) is disordered. Low complexity predominate over residues 8 to 19 (PRARASPSASPA). In terms of domain architecture, RGS spans 113-229 (SFDNLMVTPA…MNSTVYKDLL (117 aa)).

Forms a complex with G(alpha)z/i2 subunits and mu-opioid receptors; the formation of this complex results in mu-opioid receptor desensitization. Interacts with OPRM1. Post-translationally, fatty acylated. Heavily palmitoylated in the cysteine string motif. In terms of processing, N- and O-glycosylated in synapsomal membranes. Serine phosphorylated in synapsomal membranes. Post-translationally, sumoylated with SUMO1, SUMO2 and SUMO3. Sumoylation increases binding to the G-proteins, G(alpha)-i2 and G(z), and interaction with mu-opioid receptors.

It localises to the membrane. It is found in the nucleus. The protein resides in the cytoplasm. Inhibits signal transduction by increasing the GTPase activity of G protein alpha subunits thereby driving them into their inactive GDP-bound form. Binds selectively to G(z)-alpha and G(alpha)-i2 subunits, accelerates their GTPase activity and regulates their signaling activities. The G(z)-alpha activity is inhibited by the phosphorylation and palmitoylation of the G-protein. Negatively regulates mu-opioid receptor-mediated activation of the G-proteins. In Mus musculus (Mouse), this protein is Regulator of G-protein signaling 20 (Rgs20).